Reading from the N-terminus, the 430-residue chain is Solanesyl-diphosphate synthase 1, mitochondrial (430 aa).

A mitochondrion-targeting transit peptide spans 1–31; sequence MSWRWALARRVAALGATSGGGDGATAQAQRL. Isopentenyl diphosphate is bound by residues K133, R136, and H182. Positions 189 and 193 each coordinate Mg(2+). Residue R198 participates in an all-trans-polyprenyl diphosphate binding. R199 is an isopentenyl diphosphate binding site. An all-trans-polyprenyl diphosphate-binding residues include K275, T276, Q313, and K330.

Belongs to the FPP/GGPP synthase family. Homodimer. Requires Mg(2+) as cofactor. Expressed in leaves, stems and roots. Highest expression in roots.

It localises to the mitochondrion. The catalysed reaction is 7 isopentenyl diphosphate + (2E)-geranyl diphosphate = all-trans-nonaprenyl diphosphate + 7 diphosphate. It functions in the pathway cofactor biosynthesis; ubiquinone biosynthesis. Functionally, involved in the supply of solanesyl diphosphate for ubiquinone-9 (UQ-9) biosynthesis in mitochondria. Farnesyl diphosphate is the preferred substrate. The chain is Solanesyl-diphosphate synthase 1, mitochondrial from Oryza sativa subsp. japonica (Rice).